The following is a 189-amino-acid chain: Protein GrpE (189 aa).

The tract at residues 1–37 is disordered; it reads MSDSSKEKKKKFADMVSRQKGDDQQSDNHKQTDDLNE. Residues 17 to 33 are compositionally biased toward basic and acidic residues; it reads SRQKGDDQQSDNHKQTD.

Belongs to the GrpE family. In terms of assembly, homodimer.

It localises to the cytoplasm. Participates actively in the response to hyperosmotic and heat shock by preventing the aggregation of stress-denatured proteins, in association with DnaK and GrpE. It is the nucleotide exchange factor for DnaK and may function as a thermosensor. Unfolded proteins bind initially to DnaJ; upon interaction with the DnaJ-bound protein, DnaK hydrolyzes its bound ATP, resulting in the formation of a stable complex. GrpE releases ADP from DnaK; ATP binding to DnaK triggers the release of the substrate protein, thus completing the reaction cycle. Several rounds of ATP-dependent interactions between DnaJ, DnaK and GrpE are required for fully efficient folding. This Wolbachia pipientis wMel protein is Protein GrpE.